We begin with the raw amino-acid sequence, 432 residues long: Trigger factor (432 aa).

In terms of domain architecture, PPIase FKBP-type spans 161-246 (EDRVTIDFTG…LKKVEERELP (86 aa)).

Belongs to the FKBP-type PPIase family. Tig subfamily.

It is found in the cytoplasm. It carries out the reaction [protein]-peptidylproline (omega=180) = [protein]-peptidylproline (omega=0). In terms of biological role, involved in protein export. Acts as a chaperone by maintaining the newly synthesized protein in an open conformation. Functions as a peptidyl-prolyl cis-trans isomerase. In Cronobacter sakazakii (strain ATCC BAA-894) (Enterobacter sakazakii), this protein is Trigger factor.